The following is a 134-amino-acid chain: Large-conductance mechanosensitive channel (134 aa).

A run of 2 helical transmembrane segments spans residues 16–36 (VIDL…VTAL) and 84–104 (INTL…IKVI).

This sequence belongs to the MscL family. In terms of assembly, homopentamer.

It localises to the cell inner membrane. Channel that opens in response to stretch forces in the membrane lipid bilayer. May participate in the regulation of osmotic pressure changes within the cell. The polypeptide is Large-conductance mechanosensitive channel (Stenotrophomonas maltophilia (strain R551-3)).